We begin with the raw amino-acid sequence, 373 residues long: Chorismate synthase (373 aa).

Arginine 46 is a binding site for NADP(+). Residues 123-125, 250-251, glycine 295, 310-314, and arginine 337 each bind FMN; these read RSS, NA, and KPTPS.

Belongs to the chorismate synthase family. FMNH2 serves as cofactor.

It catalyses the reaction 5-O-(1-carboxyvinyl)-3-phosphoshikimate = chorismate + phosphate. It participates in metabolic intermediate biosynthesis; chorismate biosynthesis; chorismate from D-erythrose 4-phosphate and phosphoenolpyruvate: step 7/7. Catalyzes the anti-1,4-elimination of the C-3 phosphate and the C-6 proR hydrogen from 5-enolpyruvylshikimate-3-phosphate (EPSP) to yield chorismate, which is the branch point compound that serves as the starting substrate for the three terminal pathways of aromatic amino acid biosynthesis. This reaction introduces a second double bond into the aromatic ring system. The sequence is that of Chorismate synthase from Methanococcus aeolicus (strain ATCC BAA-1280 / DSM 17508 / OCM 812 / Nankai-3).